The chain runs to 555 residues: CTP synthase (555 aa).

The amidoligase domain stretch occupies residues 1 to 267 (MPKFVFVTGG…CKEVLEFLDL (267 aa)). Ser-13 is a CTP binding site. Ser-13 contacts UTP. Residues 14 to 19 (SIGKGI) and Asp-71 contribute to the ATP site. Residues Asp-71 and Glu-141 each coordinate Mg(2+). CTP-binding positions include 148–150 (DIE), 188–193 (KTKPTQ), and Lys-224. Residues 188 to 193 (KTKPTQ) and Lys-224 contribute to the UTP site. In terms of domain architecture, Glutamine amidotransferase type-1 spans 292–534 (KVAVVGKYVQ…IAAAQSRLPR (243 aa)). An L-glutamine-binding site is contributed by Gly-354. The Nucleophile; for glutamine hydrolysis role is filled by Cys-381. L-glutamine-binding positions include 382 to 385 (LGMQ), Glu-405, and Arg-462. Residues His-507 and Glu-509 contribute to the active site. The disordered stretch occupies residues 532 to 555 (LPRSPQEALKQTQINSPNQSKNNP). A compositionally biased stretch (polar residues) spans 540–555 (LKQTQINSPNQSKNNP).

This sequence belongs to the CTP synthase family. As to quaternary structure, homotetramer.

The catalysed reaction is UTP + L-glutamine + ATP + H2O = CTP + L-glutamate + ADP + phosphate + 2 H(+). It catalyses the reaction L-glutamine + H2O = L-glutamate + NH4(+). The enzyme catalyses UTP + NH4(+) + ATP = CTP + ADP + phosphate + 2 H(+). It functions in the pathway pyrimidine metabolism; CTP biosynthesis via de novo pathway; CTP from UDP: step 2/2. With respect to regulation, allosterically activated by GTP, when glutamine is the substrate; GTP has no effect on the reaction when ammonia is the substrate. The allosteric effector GTP functions by stabilizing the protein conformation that binds the tetrahedral intermediate(s) formed during glutamine hydrolysis. Inhibited by the product CTP, via allosteric rather than competitive inhibition. Its function is as follows. Catalyzes the ATP-dependent amination of UTP to CTP with either L-glutamine or ammonia as the source of nitrogen. Regulates intracellular CTP levels through interactions with the four ribonucleotide triphosphates. The chain is CTP synthase from Prochlorococcus marinus (strain MIT 9211).